We begin with the raw amino-acid sequence, 434 residues long: Bcl-2-like protein 13 (434 aa).

The BH4 motif lies at 14 to 30 (ETKYVVLSYLGLLSQEK). Position 35 is a phosphoserine (serine 35). The BH3 motif lies at 97 to 113 (IEDCLAHLGERVSQDLK). The BH1 motif lies at 144-154 (ASGWNKLLVPL). Positions 190 to 203 (FIIQQGGWGSVFSL) match the BH2 motif. The tract at residues 224-245 (LPSDNSGQVSPPESPTVTTSWQ) is disordered. Residues 226–245 (SDNSGQVSPPESPTVTTSWQ) show a composition bias toward polar residues. Residues 243-253 (SWQSESLPVSL) form an A repeat. Phosphoserine occurs at positions 256, 258, 300, 343, 347, 377, and 387. The stretch at 258 to 268 (SWHTESLPVSL) is one A; approximate repeat. Residues 282–303 (EVKSLDSSGAGEKSENNSSNSD) are disordered. The disordered stretch occupies residues 363–398 (RPEAVERAEGAAQLSEERAGSRKKSHTGEAAAVRGA). The span at 365–382 (EAVERAEGAAQLSEERAG) shows a compositional bias: basic and acidic residues. A helical membrane pass occupies residues 409 to 429 (VLLFGGAAAVAILAVAVGVAL).

Belongs to the Bcl-2 family. As to quaternary structure, monomer.

The protein resides in the mitochondrion membrane. In terms of biological role, may promote the activation of caspase-3 and apoptosis. This is Bcl-2-like protein 13 (Bcl2l13) from Mus musculus (Mouse).